We begin with the raw amino-acid sequence, 890 residues long: Wolframin (890 aa).

Residue M1 is modified to N-acetylmethionine. Residues 1–86 (MDSNTAPLGP…TGPTKGDMEI (86 aa)) form a disordered region. The segment at 1-321 (MDSNTAPLGP…MHWLSTIIPT (321 aa)) is interaction with ATP6V1A. Residues 10-20 (PSCPQPPPAPQ) are compositionally biased toward pro residues. Phosphothreonine; by FAM20C is present on T30. S32 bears the Phosphoserine; by FAM20C mark. S157 carries the post-translational modification Phosphoserine. 10 helical membrane-spanning segments follow: residues 314–334 (WLSTIIPTHHINALIFFFIVS), 340–360 (FFAFFIPLVIFYLSFISMVIC), 402–422 (LEPYAHFLLSVFFVIFSFPIA), 427–447 (IPCSELAVITGFFTVTSYLSL), 465–485 (AGLLSLLPSMPLNWPYLKVLG), 496–516 (LVVLNVSVPCLLYVYLLYLFF), 529–549 (CYLVPYLVCFMWCELSVVILL), 563–583 (YFLFLFALPILVAGLALVGVL), 589–609 (FTSLELTKIAVTVAVCSVPLL), and 632–652 (MVKLILVWLTAIVLFCWFYVY). Over 653–869 (RSEGMKVYNS…HVKIEHDWRS (217 aa)) the chain is Lumenal. N-linked (GlcNAc...) asparagine glycans are attached at residues N661 and N746. Residues 870–890 (TVHGAVKFAFDFFFFPFLSAA) traverse the membrane as a helical segment.

As to quaternary structure, interacts with ATP6V1A. In terms of tissue distribution, highly expressed in heart followed by brain, placenta, lung and pancreas. Weakly expressed in liver, kidney and skeletal muscle. Also expressed in islet and beta-cell insulinoma cell line.

It localises to the endoplasmic reticulum membrane. The protein resides in the cytoplasmic vesicle. It is found in the secretory vesicle. Its function is as follows. Participates in the regulation of cellular Ca(2+) homeostasis, at least partly, by modulating the filling state of the endoplasmic reticulum Ca(2+) store. Negatively regulates the ER stress response and positively regulates the stability of V-ATPase subunits ATP6V1A and ATP1B1 by preventing their degradation through an unknown proteasome-independent mechanism. The chain is Wolframin (WFS1) from Homo sapiens (Human).